We begin with the raw amino-acid sequence, 225 residues long: Uracil-DNA glycosylase (225 aa).

The active-site Proton acceptor is the aspartate 65.

This sequence belongs to the uracil-DNA glycosylase (UDG) superfamily. UNG family.

The protein resides in the cytoplasm. It carries out the reaction Hydrolyzes single-stranded DNA or mismatched double-stranded DNA and polynucleotides, releasing free uracil.. In terms of biological role, excises uracil residues from the DNA which can arise as a result of misincorporation of dUMP residues by DNA polymerase or due to deamination of cytosine. In Bacillus cereus (strain ATCC 10987 / NRS 248), this protein is Uracil-DNA glycosylase.